Consider the following 252-residue polypeptide: Small ribosomal subunit protein uS2 (252 aa).

It belongs to the universal ribosomal protein uS2 family.

The sequence is that of Small ribosomal subunit protein uS2 from Alcanivorax borkumensis (strain ATCC 700651 / DSM 11573 / NCIMB 13689 / SK2).